A 643-amino-acid chain; its full sequence is MSISQTVSKSYTKSVSRGGQGVSYSQSSSHKVGGGSVRYGTTYSSGGISRVLGFQGGAGGAASAGFGGSVGGSGLSRVLGGSMVSGYRSGMGVGGLSLSGTAGLPVSLRGVGAGKALHAITSAFRTRVGGPGTSVGGYGVNYSFLPSTAGPSFGGPFGGPFGGPFGGPLGPGYIDPATLPSPDTVQHTRIREKQDLQTLNTKFANLVDQVRTLEQHNAILKAQISMITSPSDTPEGPVNTAVVASTVTATYNAQIEDLRTTNTALHSEIDHLTTIINDITTKYEEQVEVTRTLETDWNTNKDNIDNTYLTIVDLQTKVQGLDEQINTTKQIYNARVREVQAAVTGGPTAAYSIRVDNTHQAIDLTTSLQEMKTHYEVLATKSREEAFTQVQPRIQEMAVTVQAGPQAIIQAKEQIHVFKLQIDSVHREIDRLHRKNTDVEREITVIETNIHTQSDEWTNNINSLKVDLEVIKKQITQYARDYQDLLATKMSLDVEIAAYKKLLDSEETRISHGGGITITTNAGTFPGGLSAAPGGGASYAMVPAGVGGVGLAGVGGYGFRSMGGGGGVGYGAGGGGVGYGVGGGFGGGMGMSMSRMSMGAAVGGGSYGSGSGYSGGFGLSSSRAGYSASRKSYSSARSSSRIY.

A compositionally biased stretch (polar residues) spans 1 to 13; the sequence is MSISQTVSKSYTK. Residues 1-34 are disordered; the sequence is MSISQTVSKSYTKSVSRGGQGVSYSQSSSHKVGG. Residues 1-191 form a head region; sequence MSISQTVSKS…PDTVQHTRIR (191 aa). The span at 14–31 shows a compositional bias: low complexity; it reads SVSRGGQGVSYSQSSSHK. Residues 192–510 enclose the IF rod domain; sequence EKQDLQTLNT…KLLDSEETRI (319 aa). Residues 193–227 are coil 1A; sequence KQDLQTLNTKFANLVDQVRTLEQHNAILKAQISMI. A linker 1 region spans residues 228–240; that stretch reads TSPSDTPEGPVNT. A coil 1B region spans residues 241–341; that stretch reads AVVASTVTAT…YNARVREVQA (101 aa). The linker 12 stretch occupies residues 342 to 362; it reads AVTGGPTAAYSIRVDNTHQAI. Residues 363 to 381 are coil 2A; it reads DLTTSLQEMKTHYEVLATK. Positions 382–389 are linker 2; it reads SREEAFTQ. Residues 390 to 510 form a coil 2B region; the sequence is VQPRIQEMAV…KLLDSEETRI (121 aa). The segment at 511-643 is tail; sequence SHGGGITITT…SSARSSSRIY (133 aa). Positions 622–643 are disordered; it reads SRAGYSASRKSYSSARSSSRIY.

It belongs to the intermediate filament family. As to quaternary structure, coiled-coil heterodimer of an alpha and a gamma subunit. Assemble into 10 nm filaments. Forms a massive, conical, intermediate filament biopolymer of approximately 60 cm.

It is found in the secreted. The protein resides in the extracellular space. Released extracellularly into seawater and provides physical and biological defense against invasive organism by modulation of the viscoelastic properties of mucus. The sequence is that of Thread biopolymer filament subunit alpha from Eptatretus stoutii (Pacific hagfish).